Here is a 466-residue protein sequence, read N- to C-terminus: Asparagine--tRNA ligase (466 aa).

The protein belongs to the class-II aminoacyl-tRNA synthetase family. In terms of assembly, homodimer.

The protein resides in the cytoplasm. The catalysed reaction is tRNA(Asn) + L-asparagine + ATP = L-asparaginyl-tRNA(Asn) + AMP + diphosphate + H(+). In Salmonella choleraesuis (strain SC-B67), this protein is Asparagine--tRNA ligase.